The chain runs to 236 residues: 2,3,4,5-tetrahydropyridine-2,6-dicarboxylate N-acetyltransferase (236 aa).

Belongs to the transferase hexapeptide repeat family. DapH subfamily.

The catalysed reaction is (S)-2,3,4,5-tetrahydrodipicolinate + acetyl-CoA + H2O = L-2-acetamido-6-oxoheptanedioate + CoA. It functions in the pathway amino-acid biosynthesis; L-lysine biosynthesis via DAP pathway; LL-2,6-diaminopimelate from (S)-tetrahydrodipicolinate (acetylase route): step 1/3. Its function is as follows. Catalyzes the transfer of an acetyl group from acetyl-CoA to tetrahydrodipicolinate. In Clostridium botulinum (strain Loch Maree / Type A3), this protein is 2,3,4,5-tetrahydropyridine-2,6-dicarboxylate N-acetyltransferase.